The primary structure comprises 606 residues: DNA mismatch repair protein MutL (606 aa).

The interval 348 to 378 is disordered; the sequence is QPHAQRPQAPWSAETSPFRPYPPAAGFSERP.

Belongs to the DNA mismatch repair MutL/HexB family.

Its function is as follows. This protein is involved in the repair of mismatches in DNA. It is required for dam-dependent methyl-directed DNA mismatch repair. May act as a 'molecular matchmaker', a protein that promotes the formation of a stable complex between two or more DNA-binding proteins in an ATP-dependent manner without itself being part of a final effector complex. The protein is DNA mismatch repair protein MutL of Rhizobium etli (strain CIAT 652).